Reading from the N-terminus, the 267-residue chain is Undecaprenyl-diphosphatase (267 aa).

The next 7 helical transmembrane spans lie at 1–21, 49–69, 83–103, 111–131, 190–210, 219–239, and 245–265; these read MTLFHLILVAVIQGLTEFLPV, VGTLFAVVLYFRADVAVAVAG, AFLALCLLIATVPVMVVGLAL, ALRSMAVIGWTMLIFGIVLYW, MLMSIPTILASGGLLGVEVAA, DAAIGAVFAFGAALLALTLMM, and VSFTPYVIYRVCLGTILLIIA.

This sequence belongs to the UppP family.

The protein resides in the cell inner membrane. The enzyme catalyses di-trans,octa-cis-undecaprenyl diphosphate + H2O = di-trans,octa-cis-undecaprenyl phosphate + phosphate + H(+). Catalyzes the dephosphorylation of undecaprenyl diphosphate (UPP). Confers resistance to bacitracin. This Dinoroseobacter shibae (strain DSM 16493 / NCIMB 14021 / DFL 12) protein is Undecaprenyl-diphosphatase.